The chain runs to 112 residues: Nitrogen regulatory protein P-II (112 aa).

Y51 carries the O-UMP-tyrosine modification.

This sequence belongs to the P(II) protein family. As to quaternary structure, homotrimer.

In terms of biological role, in nitrogen-limiting conditions, when the ratio of Gln to 2-ketoglutarate decreases, P-II is uridylylated to P-II-UMP. P-II-UMP allows the deadenylation of glutamine synthetase (GS), thus activating the enzyme. Conversely, in nitrogen excess P-II is deuridylated and promotes the adenylation of GS. P-II indirectly controls the transcription of the GS gene (glnA). P-II prevents NR-II-catalyzed conversion of NR-I to NR-I-phosphate, the transcriptional activator of glnA. When P-II is uridylylated to P-II-UMP, these events are reversed. The sequence is that of Nitrogen regulatory protein P-II (glnB) from Aquifex aeolicus (strain VF5).